Here is a 156-residue protein sequence, read N- to C-terminus: Small ribosomal subunit protein uS7 (156 aa).

It belongs to the universal ribosomal protein uS7 family. As to quaternary structure, part of the 30S ribosomal subunit. Contacts proteins S9 and S11.

Its function is as follows. One of the primary rRNA binding proteins, it binds directly to 16S rRNA where it nucleates assembly of the head domain of the 30S subunit. Is located at the subunit interface close to the decoding center, probably blocks exit of the E-site tRNA. The protein is Small ribosomal subunit protein uS7 of Rhizobium etli (strain ATCC 51251 / DSM 11541 / JCM 21823 / NBRC 15573 / CFN 42).